The primary structure comprises 217 residues: Adenylate kinase (217 aa).

An ATP-binding site is contributed by Gly10–Thr15. An NMP region spans residues Ser30 to Val59. AMP-binding positions include Thr31, Arg36, Glu57–Val59, Gly85–Arg88, and Gln92. The segment at Gly126–Asp163 is LID. ATP is bound by residues Arg127 and Thr136–Tyr137. The AMP site is built by Arg160 and Arg171. Residue Gln199 participates in ATP binding.

Belongs to the adenylate kinase family. In terms of assembly, monomer.

It is found in the cytoplasm. It catalyses the reaction AMP + ATP = 2 ADP. Its pathway is purine metabolism; AMP biosynthesis via salvage pathway; AMP from ADP: step 1/1. In terms of biological role, catalyzes the reversible transfer of the terminal phosphate group between ATP and AMP. Plays an important role in cellular energy homeostasis and in adenine nucleotide metabolism. The protein is Adenylate kinase of Halalkalibacterium halodurans (strain ATCC BAA-125 / DSM 18197 / FERM 7344 / JCM 9153 / C-125) (Bacillus halodurans).